The sequence spans 269 residues: Cleavage and polyadenylation specificity factor subunit 4 (269 aa).

C3H1-type zinc fingers lie at residues Lys35 to Ser61, Gly62 to Asp89, Met90 to Pro117, Glu118 to His142, and Thr143 to Phe169. Residues Met173–Arg199 are disordered. Residues Ser200, Ser202, and Ser212 each carry the phosphoserine modification. The CCHC-type zinc-finger motif lies at Val243 to Lys260. Ser267 is modified (phosphoserine).

Belongs to the CPSF4/YTH1 family. Component of the cleavage and polyadenylation specificity factor (CPSF) complex, composed of CPSF1, CPSF2, CPSF3, CPSF4 and FIP1L1. Interacts with FIP1L1. In terms of assembly, (Microbial infection) Interacts with influenza A virus NS1 blocks processing of pre-mRNAs, thereby preventing nuclear export of host cell mRNAs.

The protein resides in the nucleus. Its function is as follows. Component of the cleavage and polyadenylation specificity factor (CPSF) complex that play a key role in pre-mRNA 3'-end formation, recognizing the AAUAAA signal sequence and interacting with poly(A) polymerase and other factors to bring about cleavage and poly(A) addition. CPSF4 binds RNA polymers with a preference for poly(U). The protein is Cleavage and polyadenylation specificity factor subunit 4 (CPSF4) of Homo sapiens (Human).